A 103-amino-acid polypeptide reads, in one-letter code: NADH-quinone oxidoreductase subunit K (103 aa).

The next 3 membrane-spanning stretches (helical) occupy residues 6–26, 30–50, and 66–86; these read IEYY…GFLL, LLVL…TLVA, and FFVI…VLAF.

This sequence belongs to the complex I subunit 4L family. NDH-1 is composed of 14 different subunits. Subunits NuoA, H, J, K, L, M, N constitute the membrane sector of the complex.

The protein localises to the cell inner membrane. It catalyses the reaction a quinone + NADH + 5 H(+)(in) = a quinol + NAD(+) + 4 H(+)(out). NDH-1 shuttles electrons from NADH, via FMN and iron-sulfur (Fe-S) centers, to quinones in the respiratory chain. The immediate electron acceptor for the enzyme in this species is believed to be ubiquinone. Couples the redox reaction to proton translocation (for every two electrons transferred, four hydrogen ions are translocated across the cytoplasmic membrane), and thus conserves the redox energy in a proton gradient. This Sorangium cellulosum (strain So ce56) (Polyangium cellulosum (strain So ce56)) protein is NADH-quinone oxidoreductase subunit K.